Reading from the N-terminus, the 1674-residue chain is Kinesin-like protein KIF21A (1674 aa).

Met1 carries the post-translational modification N-acetylmethionine. The Kinesin motor domain occupies 9-371; the sequence is SVRVAVRIRP…LKYANRARNI (363 aa). 88 to 95 provides a ligand contact to ATP; the sequence is GQTGAGKT. Residues 365–575 are a coiled coil; it reads ANRARNIKNK…NREERSVAGK (211 aa). Ser524 is subject to Phosphoserine. 3 disordered regions span residues 556–641, 779–804, and 841–881; these read KKRL…DEKA, EEQEKARLTESRRNREIAQLKKDQRK, and SDKV…AQQK. Residues 560–597 show a composition bias toward basic and acidic residues; sequence QKLEESNREERSVAGKEDNTDTDQEKKEEKGVSERENN. Over residues 598–637 the composition is skewed to acidic residues; the sequence is ELEVEESQEVSDHEDEEEEEEEEEDDIDGGESSDESDSES. Residues 851-865 are compositionally biased toward polar residues; the sequence is KLSSSDAPAQDTGSS. Coiled coils occupy residues 931–1019 and 1053–1083; these read TDII…AKEE and LQAAQKEAQIKVLEGRLKQTEITSATQNQLL. The tract at residues 1116-1138 is disordered; sequence VEDSTDEDAPLNSPGSEGSTLSS. The segment covering 1128-1138 has biased composition (polar residues); the sequence is SPGSEGSTLSS. Positions 1146-1167 are interaction with KANK1 and KANK2; that stretch reads EVKPKNKARRRTTTQMELLYAD. 2 stretches are compositionally biased toward polar residues: residues 1170-1179 and 1196-1205; these read ELASDTSTGD and GMNTETSGTS. A disordered region spans residues 1170–1318; sequence ELASDTSTGD…SSLSEVHRSS (149 aa). Phosphoserine is present on residues Ser1212, Ser1225, Ser1229, and Ser1239. The span at 1245–1262 shows a compositional bias: basic and acidic residues; it reads KAYEKAEKSKAKEQKHSD. Polar residues predominate over residues 1288-1297; that stretch reads NRLTVSQGNT. WD repeat units follow at residues 1345–1382, 1385–1423, 1449–1487, 1490–1532, 1541–1578, 1582–1621, and 1624–1661; these read GHTKAVLCVDSTDDLLFTGSKDRTCKVWNLVTGQEIMS, GHPNNVVSVKYCNYTSLVFTVSTSYIKVWDIRDSAKCIR, SGENQINQIALNPTGTFLYAASGNAVRMWDLKRFQSTGK, GHLG…LGTV, PHYDGIEALTIQGDNLFSGSRDNGIKKWDLTQKDLLQQ, AHKDWVCALGVVPDHPVLLSGCRGGILKVWNMDTFMPVGE, and GHDSPINAICVNSTHIFTAADDRTVRIWKARNLQDGQI. Ser1662 carries the phosphoserine modification. Thr1664 is modified (phosphothreonine). Ser1673 carries the phosphoserine modification.

This sequence belongs to the TRAFAC class myosin-kinesin ATPase superfamily. Kinesin family. In terms of assembly, part of a cortical microtubule stabilization complex (CMSC) composed of KANK1, PPFIA1, PPFIBP1, ERC1/ELKS, PHLDB2/LL5beta, CLASPs, KIF21A and possibly additional interactors; within CMSCs KANK1 and PHLDB2/LL5beta seem to be the core components for recruiting microtubule-binding proteins KIF21A and CLASPs, whereas PPFIA1, PPFIBP1 and ERC1/ELKS serve as scaffolds for protein clustering. Interacts (via residues 1146-1167) with KANK1 (via ankyrin repeats 1-5) and KANK2 (via ankyrin repeats 1-5).

The protein resides in the cytoplasm. It localises to the cytoskeleton. Its subcellular location is the cell cortex. It is found in the cell projection. The protein localises to the axon. The protein resides in the dendrite. It localises to the growth cone. Its function is as follows. Processive microtubule plus-end directed motor protein involved in neuronal axon guidance. Is recruited by KANK1 to cortical microtubule stabilizing complexes (CMSCs) at focal adhesions (FAs) rims where it promotes microtubule capture and stability. Controls microtubule polymerization rate at axonal growth cones and suppresses microtubule growth without inducing microtubule disassembly once it reaches the cell cortex. The chain is Kinesin-like protein KIF21A (KIF21A) from Homo sapiens (Human).